Here is a 151-residue protein sequence, read N- to C-terminus: Large ribosomal subunit protein bL9 (151 aa).

It belongs to the bacterial ribosomal protein bL9 family.

Binds to the 23S rRNA. In Mycolicibacterium smegmatis (strain ATCC 700084 / mc(2)155) (Mycobacterium smegmatis), this protein is Large ribosomal subunit protein bL9.